A 797-amino-acid chain; its full sequence is Peroxisome proliferator-activated receptor gamma coactivator 1-alpha (797 aa).

N6-acetyllysine is present on lysine 77. Residues 101–138 form a disordered region; sequence EDGLPSFDALTDGAVTTDNEASPSSMPDGTPPPQEAEE. Positions 114 to 127 are enriched in polar residues; it reads AVTTDNEASPSSMP. The LXXLL motif motif lies at 142-146; that stretch reads LKKLL. Lysine 144 is subject to N6-acetyllysine. Position 177 is a phosphothreonine; by AMPK (threonine 177). An N6-acetyllysine modification is found at lysine 183. The interval 212-276 is disordered; the sequence is YLTTNDDPPH…NDPKGSPFEN (65 aa). The span at 218-236 shows a compositional bias: basic and acidic residues; the sequence is DPPHTKPTENRNSSRDKCA. Residues 243 to 259 show a composition bias toward polar residues; the sequence is TQPQSQHAQAKPTTLSL. An N6-acetyllysine mark is found at lysine 253, lysine 270, lysine 277, lysine 320, lysine 346, lysine 412, lysine 441, and lysine 450. Residues 289 to 376 form a disordered region; sequence GTAGLTPPTT…HEERKTKRPS (88 aa). Residues 292 to 338 are interaction with PPARG; that stretch reads GLTPPTTPPHKANQDNPFKASPKLKPSCKTVVPPPTKRARYSECSGT. The mediates interaction with RNF34 stretch occupies residues 349-797; that stretch reads EQSELYAQLS…LKEAQRSLRR (449 aa). Serine 538 bears the Phosphoserine; by AMPK mark. Disordered stretches follow at residues 543-598, 612-634, and 648-668; these read NSPC…SSRS, HRNSPLYVRSRSRSPYSRRPRYD, and EYRKEHEKRESERAKQRERQK. The segment covering 562-577 has biased composition (basic residues); it reads QRMRSRSRSFSRHRSC. Low complexity predominate over residues 578-598; sequence SRSPYSRSRSRSPGSRSSSRS. Residues 621 to 630 show a composition bias toward basic residues; it reads SRSRSPYSRR. The region spanning 676-752 is the RRM domain; the sequence is RVIYVGKIRP…TDFELYFCGR (77 aa). 2 positions are modified to N6-acetyllysine: lysine 757 and lysine 778.

As to quaternary structure, homooligomer. Interacts with MYBBP1A; inhibits MYBBP1A transcriptional activation. Interacts with PRDM16, LPIN1 and PML. Interacts (via LXXLL motif) with RORA and RORC (via AF-2 motif); activates RORA and RORC transcriptional activation. Interacts with LRPPRC. Interacts with FOXO1. Interacts with NR5A2. In terms of processing, phosphorylation by AMPK in skeletal muscle increases activation of its own promoter. Phosphorylated by CLK2. Post-translationally, heavily acetylated by KAT2A/GCN5 under conditions of high nutrients, leading to inactivation of PPARGC1A. Deacetylated by SIRT1 in low nutrients/high NAD conditions, leading to its activation. Ubiquitinated. Ubiquitination by RNF34 induces proteasomal degradation. As to expression, white quadriceps and red tibialis anterior (TA) muscles, liver, kidney and brown adipose tissue (at protein level). Skeletal muscle, brown adipose tissue, heart, kidney and brain.

The protein localises to the nucleus. It is found in the PML body. Its function is as follows. Transcriptional coactivator for steroid receptors and nuclear receptors. Greatly increases the transcriptional activity of PPARG and thyroid hormone receptor on the uncoupling protein promoter. Can regulate key mitochondrial genes that contribute to the program of adaptive thermogenesis. Plays an essential role in metabolic reprogramming in response to dietary availability through coordination of the expression of a wide array of genes involved in glucose and fatty acid metabolism. Acts as a key regulator of gluconeogenesis: stimulates hepatic gluconeogenesis by increasing the expression of gluconeogenic enzymes, and acting together with FOXO1 to promote the fasting gluconeogenic program. Induces the expression of PERM1 in the skeletal muscle in an ESRRA-dependent manner. Also involved in the integration of the circadian rhythms and energy metabolism. Required for oscillatory expression of clock genes, such as BMAL1 and NR1D1, through the coactivation of RORA and RORC, and metabolic genes, such as PDK4 and PEPCK. The sequence is that of Peroxisome proliferator-activated receptor gamma coactivator 1-alpha (Ppargc1a) from Mus musculus (Mouse).